The primary structure comprises 517 residues: Gamma-1-syntrophin (517 aa).

Residues 57–140 (TVTIRRQTVG…EVTLTVSFLK (84 aa)) form the PDZ domain. Residues 283-390 (QIVYMGWCEA…WERAFQTATF (108 aa)) form the PH domain.

Belongs to the syntrophin family. In terms of assembly, interacts with the dystrophin protein DMD and related proteins DTNA and DTNB. Interacts with DGKZ.

The protein resides in the cytoplasm. The protein localises to the cytoskeleton. It localises to the nucleus. Its function is as follows. Adapter protein that binds to and probably organizes the subcellular localization of a variety of proteins. May link various receptors to the actin cytoskeleton and the dystrophin glycoprotein complex. May participate in regulating the subcellular location of diacylglycerol kinase-zeta to ensure that diacylglycerol is rapidly inactivated following receptor activation. In Mus musculus (Mouse), this protein is Gamma-1-syntrophin (Sntg1).